The primary structure comprises 106 residues: Large ribosomal subunit protein uL24 (106 aa).

This sequence belongs to the universal ribosomal protein uL24 family. As to quaternary structure, part of the 50S ribosomal subunit.

One of two assembly initiator proteins, it binds directly to the 5'-end of the 23S rRNA, where it nucleates assembly of the 50S subunit. Functionally, one of the proteins that surrounds the polypeptide exit tunnel on the outside of the subunit. In Paracidovorax citrulli (strain AAC00-1) (Acidovorax citrulli), this protein is Large ribosomal subunit protein uL24.